We begin with the raw amino-acid sequence, 642 residues long: Arginine--tRNA ligase, chloroplastic/mitochondrial (642 aa).

A chloroplast and mitochondrion-targeting transit peptide spans 1–53 (MFIFPKDENRRETLTTKLRFSADHLTFTTVTEKLRATAWRFAFSSRAKSVVAM). At A54 the chain carries N-acetylalanine. A 'HIGH' region motif is present at residues 190–201 (PNIAKEMHVGHL).

Belongs to the class-I aminoacyl-tRNA synthetase family.

It localises to the plastid. The protein localises to the chloroplast. It is found in the mitochondrion. The enzyme catalyses tRNA(Arg) + L-arginine + ATP = L-arginyl-tRNA(Arg) + AMP + diphosphate. Functionally, forms part of a macromolecular complex that catalyzes the attachment of specific amino acids to cognate tRNAs during protein synthesis. This Arabidopsis thaliana (Mouse-ear cress) protein is Arginine--tRNA ligase, chloroplastic/mitochondrial.